The following is a 417-amino-acid chain: MDAAVIGLQWGDEGKGKIVDHLAGDFDSVVRFNGGNNAGHTVIVGERTYKLRVLPSGILREDVVSVIGNGVVLDPQGLLDEIHLLKKEGVQIHPGKLLIADNCHLVLPIHRELDVLFEQKQKLGTTKCGIGPCYQDKVARRGIRLCDLRSEEQLRKTLAGLSYYHNIVRKGAGLQEVCQEILFASLFAMRDELLCYAVPPCELQGILSGKSKLYEGAQGMLLDIDHGTYPFVTSGSSGLGQVMNGAALGCVNRVIGVMKGYVTRVGEGILPTEQDNAFGSELQKLGKEVGTVSGRIRRCGWCDLPLVRYVNAVAGVTEIVITKLDVLDSFNEIFLCCAYKGKKGKLIEICSPSKLCYSKYEAQYIVMKGWRSSTVGVTSFCDLPDGAKSFVETIEKCLDLPVTMISNGPERTQVLHR.

GTP-binding positions include 11 to 17 (GDEGKGK) and 39 to 41 (GHT). Asp-12 (proton acceptor) is an active-site residue. 2 residues coordinate Mg(2+): Asp-12 and Gly-39. Residues 12 to 15 (DEGK), 37 to 40 (NAGH), Thr-126, Arg-140, Gln-218, Thr-233, and Arg-295 contribute to the IMP site. The Proton donor role is filled by His-40. 291–297 (TVSGRIR) contributes to the substrate binding site. GTP-binding positions include Arg-297, 323–325 (KLD), and 406–408 (SNG).

This sequence belongs to the adenylosuccinate synthetase family. Homodimer. Requires Mg(2+) as cofactor.

The protein localises to the cytoplasm. The enzyme catalyses IMP + L-aspartate + GTP = N(6)-(1,2-dicarboxyethyl)-AMP + GDP + phosphate + 2 H(+). Its pathway is purine metabolism; AMP biosynthesis via de novo pathway; AMP from IMP: step 1/2. Its function is as follows. Plays an important role in the de novo pathway of purine nucleotide biosynthesis. Catalyzes the first committed step in the biosynthesis of AMP from IMP. In Neorickettsia sennetsu (strain ATCC VR-367 / Miyayama) (Ehrlichia sennetsu), this protein is Adenylosuccinate synthetase.